Consider the following 626-residue polypeptide: Myelin-associated glycoprotein (626 aa).

Positions 1-19 (MIFLTTLPLFWIMISASRG) are cleaved as a signal peptide. Positions 20–325 (GHWGAWMPSS…RTVELSVMYA (306 aa)) are interaction with RTN4R and RTN4RL2. Residues 20-516 (GHWGAWMPSS…HRLMWAKIGP (497 aa)) are Extracellular-facing. Residues 22-120 (WGAWMPSSIS…LGGKYYFRGD (99 aa)) enclose the Ig-like V-type domain. 3 disulfides stabilise this stretch: C37/C165, C42/C100, and C159/C217. Position 65–67 (65–67 (YPK)) interacts with a ganglioside GT1b (d18:1(4E)). A glycan (N-linked (GlcNAc...) asparagine) is linked at N99. Residues R118 and 124-128 (YNQYT) each bind a ganglioside GT1b (d18:1(4E)). 4 Ig-like C2-type domains span residues 139-237 (NTPN…LDVK), 241-325 (VIVE…VMYA), 327-412 (WKPT…VEFA), and 413-508 (PIIL…GAHR). N223 and N246 each carry an N-linked (GlcNAc...) asparagine glycan. C261 and C305 form a disulfide bridge. 2 N-linked (GlcNAc...) asparagine glycosylation sites follow: N315 and N332. A disulfide bond links C347 and C392. N406 carries N-linked (GlcNAc...) asparagine glycosylation. 2 disulfides stabilise this stretch: C421/C430 and C432/C488. 2 N-linked (GlcNAc...) asparagine glycosylation sites follow: N450 and N454. A helical transmembrane segment spans residues 517 to 536 (VGAVVAFAILIAIVCYITQT). The S-palmitoyl cysteine moiety is linked to residue C531. The Cytoplasmic segment spans residues 537–626 (RRKKNVTESP…LAEYAEIRVK (90 aa)). 3 positions are modified to phosphoserine: S545, S547, and S549. The interval 577–626 (LGSERRLLGLRGEPPELDLSYSHSDLGKRPTKDSYTLTEELAEYAEIRVK) is required for normal axon myelination in the central nervous system. The disordered stretch occupies residues 581–608 (RRLLGLRGEPPELDLSYSHSDLGKRPTK).

It belongs to the immunoglobulin superfamily. SIGLEC (sialic acid binding Ig-like lectin) family. In terms of assembly, monomer and homodimer. Interacts (via the first three N-terminal Ig-like domains) with RTN4R and RTN4RL2. Interacts with isoform 2 of BSG. In terms of processing, N-glycosylated. Phosphorylated on tyrosine residues. Post-translationally, ubiquitinated, leading to proteasomal degradation. In terms of tissue distribution, detected in myelin. Detected in olfactory bulb and throughout the brain (at protein level). Detected in brain.

It is found in the cell membrane. The protein localises to the membrane raft. In terms of biological role, adhesion molecule that mediates interactions between myelinating cells and neurons by binding to neuronal sialic acid-containing gangliosides and to the glycoproteins RTN4R and RTN4RL2. Not required for initial myelination, but seems to play a role in the maintenance of normal axon myelination. Protects motoneurons against apoptosis, also after injury; protection against apoptosis is probably mediated via interaction with neuronal RTN4R and RTN4RL2. Required to prevent degeneration of myelinated axons in adults; this probably depends on binding to gangliosides on the axon cell membrane. Negative regulator of neurite outgrowth; in dorsal root ganglion neurons the inhibition is mediated primarily via binding to neuronal RTN4R or RTN4RL2 and to a lesser degree via binding to neuronal gangliosides. In cerebellar granule cells the inhibition is mediated primarily via binding to neuronal gangliosides. In sensory neurons, inhibition of neurite extension depends only partially on RTN4R, RTN4RL2 and gangliosides. Inhibits axon longitudinal growth. Inhibits axon outgrowth by binding to RTN4R. Preferentially binds to alpha-2,3-linked sialic acid. Binds ganglioside Gt1b. In Rattus norvegicus (Rat), this protein is Myelin-associated glycoprotein (Mag).